The primary structure comprises 453 residues: Adenosylmethionine-8-amino-7-oxononanoate aminotransferase (453 aa).

Position 118-119 (118-119 (GS)) interacts with pyridoxal 5'-phosphate. Tyrosine 151 lines the substrate pocket. Aspartate 258 serves as a coordination point for pyridoxal 5'-phosphate. Lysine 287, glycine 322, and arginine 417 together coordinate substrate. Lysine 287 carries the post-translational modification N6-(pyridoxal phosphate)lysine.

The protein belongs to the class-III pyridoxal-phosphate-dependent aminotransferase family. BioA subfamily. In terms of assembly, homodimer. The cofactor is pyridoxal 5'-phosphate.

It localises to the cytoplasm. The catalysed reaction is (8S)-8-amino-7-oxononanoate + S-adenosyl-L-methionine = S-adenosyl-4-methylsulfanyl-2-oxobutanoate + (7R,8S)-7,8-diammoniononanoate. The protein operates within cofactor biosynthesis; biotin biosynthesis; 7,8-diaminononanoate from 8-amino-7-oxononanoate (SAM route): step 1/1. Functionally, catalyzes the transfer of the alpha-amino group from S-adenosyl-L-methionine (SAM) to 7-keto-8-aminopelargonic acid (KAPA) to form 7,8-diaminopelargonic acid (DAPA). It is the only aminotransferase known to utilize SAM as an amino donor. This is Adenosylmethionine-8-amino-7-oxononanoate aminotransferase from Geobacter sulfurreducens (strain ATCC 51573 / DSM 12127 / PCA).